A 151-amino-acid chain; its full sequence is Small ribosomal subunit protein uS15 (151 aa).

It belongs to the universal ribosomal protein uS15 family.

The protein is Small ribosomal subunit protein uS15 (RPS13) of Candida maltosa (Yeast).